Consider the following 126-residue polypeptide: 5-carboxymethyl-2-hydroxymuconate Delta-isomerase (126 aa).

Pro2 serves as the catalytic Proton acceptor; via imino nitrogen.

Homotrimer.

The enzyme catalyses (2E,4Z)-5-hydroxypenta-2,4-diene-1,2,5-tricarboxylate = (3E,5R)-5-carboxy-2-oxohept-3-enedioate. Its pathway is aromatic compound metabolism; 4-hydroxyphenylacetate degradation; pyruvate and succinate semialdehyde from 4-hydroxyphenylacetate: step 4/7. Its function is as follows. Transforms 5-carboxymethyl-2-hydroxy-muconic acid (CHM) into 5-oxo-pent-3-ene-1,2,5-tricarboxylic acid (OPET). In Escherichia coli, this protein is 5-carboxymethyl-2-hydroxymuconate Delta-isomerase (hpcD).